The sequence spans 161 residues: D-amino-acid N-acetyltransferase HPA3 (161 aa).

Ser-2 carries the N-acetylserine modification. Residues 14 to 161 form the N-acetyltransferase domain; the sequence is IVVKAIEPKD…DKVLYKRNGY (148 aa). Position 98–111 (98–111) interacts with acetyl-CoA; the sequence is LYVTERARVKGVGR.

Belongs to the acetyltransferase family. GNAT subfamily. Post-translationally, autoacetylates in an intermolecular reaction.

Its subcellular location is the cytoplasm. It is found in the nucleus. The enzyme catalyses a D-alpha-amino acid + acetyl-CoA = an N-acetyl-D-amino acid + CoA + H(+). Its function is as follows. N-acetyltransferase that acts on a wide range of D-amino acids. Catalyzes the N-acetylation through an ordered bi-bi mechanism, in which acetyl-CoA is the first substrate to be bound and CoA is the last product to be liberated. D-amino acids are toxic for the cell and their N-acetylation, preceding removal from cells, plays an important role in detoxification of D-amino acids. In vitro, capable of acetylating histone H4 at 'Lys-8' and polyamines like putrescine, spermidine and spermine. The sequence is that of D-amino-acid N-acetyltransferase HPA3 from Saccharomyces cerevisiae (strain ATCC 204508 / S288c) (Baker's yeast).